The sequence spans 316 residues: MIGDGKLLASAAWDAQSLNELKAKAGQDPAANIRPVARQVEGMFVQMMLKSMREALPKDGLFSSDQTRLYTSMYDQQIAQQMTAGKGLGLADMMVKQMTSGQTMPADDAPQVPLKFSLETVNSYQNQALTQLVRKAIPKTPDSSDAPLSGDSKDFLARLSLPARLASEQSGVPHHLILAQAALESGWGQRQILRENGEPSYNVFGVKATASWKGPVTEITTTEYENGEAKKVKAKFRVYSSYLEALSDYVALLTRNPRYAAVTTAATAEQGAVALQNAGYATDPNYARKLTSMIQQLKAMSEKVSKTYSANLDNLF.

A catalytic region spans residues 151–316; it reads DSKDFLARLS…TYSANLDNLF (166 aa). Residues E223 and D248 contribute to the active site.

The protein in the N-terminal section; belongs to the FlgJ family. In the C-terminal section; belongs to the glycosyl hydrolase 73 family.

It is found in the periplasm. Flagellum-specific muramidase which hydrolyzes the peptidoglycan layer to assemble the rod structure in the periplasmic space. The sequence is that of Peptidoglycan hydrolase FlgJ (flgJ) from Salmonella typhimurium (strain LT2 / SGSC1412 / ATCC 700720).